We begin with the raw amino-acid sequence, 689 residues long: MVVLRRSFHVYTRLQRGQNLTEKIVQQYSVGLAPGKRVHSGDYVSIKPAHVMSHDNSWPVALKFMNLGARTVKDPRQIVNTLDHDIQNKSDKNLTKYRNIESFAKKHGIDFYPAGRGIGHQIMVEEGYAFPLNLTVASDSHSNTYGGMGALGTPVVRTDAAAIWATGQTWWQIPPVAQVEFKGKLHESVSGKDIIVALCGVFNKDQVLNHAIEFTGDAIKHLPVDFRLTIANMTTEWGALSGLFPVDDTLINWYKNRLNIVGPNHPRINETTIKNLEDKAKVFKADSDAVYAKKLVIDLSTLTHYVSGPNSVKVSNTVQDLARDNIKINKAYLVSCTNARLSDLESAAKVVCPTGDLSKVNKVADGVEFYFAAASSEIEKEAAEKGIWQALLAAGCKPLPSGCGPCIGLGAGLLEPGEVGISATNRNFKGRMGSKDALAYLASPAVVAASAVLGRIGSPAEVWGIEDVKSSGLLAEELACNTETSTATPVSEGSAAKVEMLEGFPEEIVGELVLCDADNVNTDGIYPGKYTYQDDVSRETMAQVCMENYDGEFGSKANAGDILVSGFNFGTGSSREQAATSLLAKGINLVVAGSFSNTFSRNSINNALLTLEIPTLVEKLRSKFENAPKELTRRTGWFLKWDVPNAKVYVTEGSPDGQVLLEQKVGELGKNLQEIIIKGGLEGWVKSQL.

A mitochondrion-targeting transit peptide spans 1–17 (MVVLRRSFHVYTRLQRG). Residues Cys336, Cys403, and Cys406 each contribute to the [4Fe-4S] cluster site.

Belongs to the aconitase/IPM isomerase family. Requires [4Fe-4S] cluster as cofactor.

It is found in the mitochondrion. The catalysed reaction is (2R,3S)-homoisocitrate = cis-homoaconitate + H2O. Its pathway is amino-acid biosynthesis; L-lysine biosynthesis via AAA pathway; L-alpha-aminoadipate from 2-oxoglutarate: step 3/5. Its function is as follows. Catalyzes the reversible hydration of cis-homoaconitate to (2R,3S)-homoisocitrate, a step in the alpha-aminoadipate pathway for lysine biosynthesis. The sequence is that of Homoaconitase, mitochondrial (LYS4) from Candida glabrata (strain ATCC 2001 / BCRC 20586 / JCM 3761 / NBRC 0622 / NRRL Y-65 / CBS 138) (Yeast).